We begin with the raw amino-acid sequence, 189 residues long: Elongation factor P (189 aa).

It belongs to the elongation factor P family.

Its subcellular location is the cytoplasm. It participates in protein biosynthesis; polypeptide chain elongation. Functionally, involved in peptide bond synthesis. Stimulates efficient translation and peptide-bond synthesis on native or reconstituted 70S ribosomes in vitro. Probably functions indirectly by altering the affinity of the ribosome for aminoacyl-tRNA, thus increasing their reactivity as acceptors for peptidyl transferase. The chain is Elongation factor P from Rhizobium johnstonii (strain DSM 114642 / LMG 32736 / 3841) (Rhizobium leguminosarum bv. viciae).